A 387-amino-acid chain; its full sequence is 3-ketoacyl-CoA thiolase (387 aa).

C91 (acyl-thioester intermediate) is an active-site residue. Catalysis depends on proton acceptor residues H343 and C373.

This sequence belongs to the thiolase-like superfamily. Thiolase family. In terms of assembly, heterotetramer of two alpha chains (FadB) and two beta chains (FadA).

It is found in the cytoplasm. The enzyme catalyses an acyl-CoA + acetyl-CoA = a 3-oxoacyl-CoA + CoA. Its pathway is lipid metabolism; fatty acid beta-oxidation. Its function is as follows. Catalyzes the final step of fatty acid oxidation in which acetyl-CoA is released and the CoA ester of a fatty acid two carbons shorter is formed. The polypeptide is 3-ketoacyl-CoA thiolase (Vibrio cholerae serotype O1 (strain ATCC 39315 / El Tor Inaba N16961)).